We begin with the raw amino-acid sequence, 1011 residues long: Protein argonaute 1C (1011 aa).

Over residues 1–11 (MASRRPTHRHH) the composition is skewed to basic residues. 2 disordered regions span residues 1–95 (MASR…SPLA) and 107–147 (RPSE…PLRP). 2 stretches are compositionally biased toward low complexity: residues 28-53 (ARYA…ARGA) and 61-92 (QQQQ…ASSS). The span at 127 to 140 (ATTTPHHIPSSSKS) shows a compositional bias: polar residues. One can recognise a PAZ domain in the interval 352-462 (PVIDFVAQLL…LPMEVCKIVE (111 aa)). Residues 638 to 959 (LLIGILPDNN…AAFRARFYME (322 aa)) form the Piwi domain. The segment covering 963 to 982 (SDSSSVVSGPGVRGPLSGSS) has biased composition (low complexity). Residues 963 to 994 (SDSSSVVSGPGVRGPLSGSSTSRTRAPGGAAV) are disordered.

The protein belongs to the argonaute family. Ago subfamily.

Functionally, probably involved in the RNA silencing pathway. May bind to short RNAs such as microRNAs (miRNAs) or short interfering RNAs (siRNAs), and represses the translation of mRNAs which are complementary to them. In Oryza sativa subsp. japonica (Rice), this protein is Protein argonaute 1C (AGO1C).